The chain runs to 258 residues: Snake venom serine protease 3 (258 aa).

Residues methionine 1–alanine 18 form the signal peptide. The propeptide occupies glutamine 19–leucine 24. In terms of domain architecture, Peptidase S1 spans valine 25–alanine 249. 6 cysteine pairs are disulfide-bonded: cysteine 31-cysteine 163, cysteine 50-cysteine 66, cysteine 98-cysteine 256, cysteine 142-cysteine 210, cysteine 174-cysteine 189, and cysteine 200-cysteine 225. An N-linked (GlcNAc...) asparagine glycan is attached at asparagine 44. Residue histidine 65 is the Charge relay system of the active site. Asparagine 103 carries N-linked (GlcNAc...) asparagine glycosylation. Residue aspartate 110 is the Charge relay system of the active site. N-linked (GlcNAc...) asparagine glycans are attached at residues asparagine 117, asparagine 121, and asparagine 154. Catalysis depends on serine 204, which acts as the Charge relay system. A glycan (N-linked (GlcNAc...) asparagine) is linked at asparagine 251.

Belongs to the peptidase S1 family. Snake venom subfamily. In terms of assembly, monomer. As to expression, expressed by the venom gland.

Its subcellular location is the secreted. Its function is as follows. Snake venom serine protease that may act in the hemostasis system of the prey. This Craspedocephalus gramineus (Bamboo pit viper) protein is Snake venom serine protease 3 (TLG3).